A 540-amino-acid polypeptide reads, in one-letter code: Membrane protein insertase YidC (540 aa).

5 helical membrane-spanning segments follow: residues 1 to 21 (MVVQNNFLFIAFIFVTFMMLD), 351 to 371 (NWGISIIIITFMVRGIMFPLT), 418 to 438 (LGGCMPLIIQMPIFLALYYML), 464 to 484 (ILPIIMGITMFLIQKISPSSI), and 497 to 517 (PLIFTIFFLWFPSGLVLYYII).

It belongs to the OXA1/ALB3/YidC family. Type 1 subfamily. As to quaternary structure, interacts with the Sec translocase complex via SecD. Specifically interacts with transmembrane segments of nascent integral membrane proteins during membrane integration.

The protein resides in the cell membrane. Its function is as follows. Required for the insertion and/or proper folding and/or complex formation of integral membrane proteins into the membrane. Involved in integration of membrane proteins that insert both dependently and independently of the Sec translocase complex, as well as at least some lipoproteins. Aids folding of multispanning membrane proteins. The polypeptide is Membrane protein insertase YidC (Wigglesworthia glossinidia brevipalpis).